A 517-amino-acid chain; its full sequence is Lysine--tRNA ligase (517 aa).

Residues 1–21 (MTEPNRAQAPAQNKAAADTPA) form a disordered region. The span at 7–20 (AQAPAQNKAAADTP) shows a compositional bias: low complexity. Mg(2+)-binding residues include Glu-427 and Glu-434.

This sequence belongs to the class-II aminoacyl-tRNA synthetase family. As to quaternary structure, homodimer. Requires Mg(2+) as cofactor.

It is found in the cytoplasm. The catalysed reaction is tRNA(Lys) + L-lysine + ATP = L-lysyl-tRNA(Lys) + AMP + diphosphate. The chain is Lysine--tRNA ligase from Cupriavidus taiwanensis (strain DSM 17343 / BCRC 17206 / CCUG 44338 / CIP 107171 / LMG 19424 / R1) (Ralstonia taiwanensis (strain LMG 19424)).